A 458-amino-acid chain; its full sequence is Argininosuccinate lyase (458 aa).

Belongs to the lyase 1 family. Argininosuccinate lyase subfamily.

The protein resides in the cytoplasm. The enzyme catalyses 2-(N(omega)-L-arginino)succinate = fumarate + L-arginine. It participates in amino-acid biosynthesis; L-arginine biosynthesis; L-arginine from L-ornithine and carbamoyl phosphate: step 3/3. This is Argininosuccinate lyase from Bacillus velezensis (strain DSM 23117 / BGSC 10A6 / LMG 26770 / FZB42) (Bacillus amyloliquefaciens subsp. plantarum).